The sequence spans 316 residues: Olfactory receptor 4N4C (316 aa).

At 1–26 (MKIANNTVVTEFILLGLTQSQDIQLL) the chain is on the cytoplasmic side. A helical transmembrane segment spans residues 27 to 47 (VFVLILIFYLIILPGNFLIIF). Residues 48 to 56 (TIRSDPGLT) are Extracellular-facing. Residues 57 to 77 (APLYLFLGNLAFLDASYSFIV) traverse the membrane as a helical segment. At 78-99 (APRMLVDFLSEKKVISYRGCIT) the chain is on the cytoplasmic side. Cys97 and Cys179 are disulfide-bonded. The helical transmembrane segment at 100–120 (QLFFLHFLGGGEGLLLVVMAF) threads the bilayer. The Extracellular portion of the chain corresponds to 121 to 143 (DRYIAICRPLHCSTVMNPRACYA). A helical transmembrane segment spans residues 144 to 164 (MMLALWLGGFVHSIIQVVLIL). The Cytoplasmic portion of the chain corresponds to 165-204 (RLPFCGPNQLDNFFCDVRQVIKLACTDMFVVELLMVFNSG). The helical transmembrane segment at 205-225 (LMTLLCFLGLLASYAVILCHV) threads the bilayer. Over 226–243 (RRAASEGKNKAMSTCTTR) the chain is Extracellular. Residues 244–264 (VIIILLMFGPAIFIYICPFRA) form a helical membrane-spanning segment. Over 265-268 (LPAD) the chain is Cytoplasmic. Residues 269-289 (KMVSLFHTVIFPLMNPMIYTL) form a helical membrane-spanning segment. Topologically, residues 290–316 (RNQEVKTSMKRLLSRHVVCQVDFIIRN) are extracellular.

Belongs to the G-protein coupled receptor 1 family.

The protein localises to the membrane. Functionally, odorant receptor. The polypeptide is Olfactory receptor 4N4C (Homo sapiens (Human)).